The following is a 225-amino-acid chain: Cytochrome c oxidase subunit 2 (225 aa).

At 1–25 the chain is on the mitochondrial intermembrane side; the sequence is MSTWFMFMFQESNSYYADNLISFHN. Residues 26–47 traverse the membrane as a helical segment; sequence MVMMIIIMISTLTVYIILDLFM. Residues 48-62 are Mitochondrial matrix-facing; the sequence is NKFSNLFLLKNHNIE. A helical transmembrane segment spans residues 63 to 82; that stretch reads IIWTIIPIIILLIICFPSLK. Topologically, residues 83–225 are mitochondrial intermembrane; that stretch reads ILYLIDEIVN…YFLNWVNKQI (143 aa). His-159, Cys-194, Glu-196, Cys-198, His-202, and Met-205 together coordinate Cu cation. A Mg(2+)-binding site is contributed by Glu-196.

Belongs to the cytochrome c oxidase subunit 2 family. In terms of assembly, component of the cytochrome c oxidase (complex IV, CIV), a multisubunit enzyme composed of a catalytic core of 3 subunits and several supernumerary subunits. The complex exists as a monomer or a dimer and forms supercomplexes (SCs) in the inner mitochondrial membrane with ubiquinol-cytochrome c oxidoreductase (cytochrome b-c1 complex, complex III, CIII). It depends on Cu cation as a cofactor.

Its subcellular location is the mitochondrion inner membrane. It catalyses the reaction 4 Fe(II)-[cytochrome c] + O2 + 8 H(+)(in) = 4 Fe(III)-[cytochrome c] + 2 H2O + 4 H(+)(out). In terms of biological role, component of the cytochrome c oxidase, the last enzyme in the mitochondrial electron transport chain which drives oxidative phosphorylation. The respiratory chain contains 3 multisubunit complexes succinate dehydrogenase (complex II, CII), ubiquinol-cytochrome c oxidoreductase (cytochrome b-c1 complex, complex III, CIII) and cytochrome c oxidase (complex IV, CIV), that cooperate to transfer electrons derived from NADH and succinate to molecular oxygen, creating an electrochemical gradient over the inner membrane that drives transmembrane transport and the ATP synthase. Cytochrome c oxidase is the component of the respiratory chain that catalyzes the reduction of oxygen to water. Electrons originating from reduced cytochrome c in the intermembrane space (IMS) are transferred via the dinuclear copper A center (CU(A)) of subunit 2 and heme A of subunit 1 to the active site in subunit 1, a binuclear center (BNC) formed by heme A3 and copper B (CU(B)). The BNC reduces molecular oxygen to 2 water molecules using 4 electrons from cytochrome c in the IMS and 4 protons from the mitochondrial matrix. The chain is Cytochrome c oxidase subunit 2 (COII) from Apis mellifera ligustica (Common honeybee).